A 330-amino-acid polypeptide reads, in one-letter code: Trans-1,2-dihydrobenzene-1,2-diol dehydrogenase (330 aa).

The protein belongs to the Gfo/Idh/MocA family. As to quaternary structure, homodimer.

The enzyme catalyses (1R,2R)-1,2-dihydrobenzene-1,2-diol + NADP(+) = catechol + NADPH + H(+). It carries out the reaction D-xylose + NADP(+) = D-xylono-1,5-lactone + NADPH + H(+). The chain is Trans-1,2-dihydrobenzene-1,2-diol dehydrogenase (dhdh) from Xenopus laevis (African clawed frog).